The following is a 288-amino-acid chain: Wilms tumor protein homolog (288 aa).

A disordered region spans residues Gln1 to His21. The 9aaTAD signature appears at Met90–Gly98. C2H2-type zinc fingers lie at residues Phe162–His186, Tyr192–His216, and Phe222–His244. 2 important for interaction with target DNA regions span residues Ser206–Lys220 and Ser232–His240. The short motif at Lys247–Ser249 is the KTS motif element. A C2H2-type 4 zinc finger spans residues Phe253–His277.

It belongs to the EGR C2H2-type zinc-finger protein family.

It is found in the nucleus speckle. The protein resides in the nucleus. It localises to the nucleoplasm. Its subcellular location is the cytoplasm. In terms of biological role, transcription factor that plays an important role in cellular development and cell survival. Recognizes and binds to the DNA sequence 5'-GCG(T/G)GGGCG-3'. Regulates the expression of numerous target genes. Plays an essential role for development of the urogenital system. It has a tumor suppressor as well as an oncogenic role in tumor formation. Function may be isoform-specific: isoforms lacking the KTS motif may act as transcription factors. Isoforms containing the KTS motif may bind mRNA and play a role in mRNA metabolism or splicing. The polypeptide is Wilms tumor protein homolog (WT1) (Alligator mississippiensis (American alligator)).